Consider the following 453-residue polypeptide: UDP-N-acetylmuramate--L-alanine ligase (453 aa).

112–118 provides a ligand contact to ATP; sequence GTHGKTT.

It belongs to the MurCDEF family.

The protein resides in the cytoplasm. It carries out the reaction UDP-N-acetyl-alpha-D-muramate + L-alanine + ATP = UDP-N-acetyl-alpha-D-muramoyl-L-alanine + ADP + phosphate + H(+). Its pathway is cell wall biogenesis; peptidoglycan biosynthesis. Its function is as follows. Cell wall formation. In Lawsonia intracellularis (strain PHE/MN1-00), this protein is UDP-N-acetylmuramate--L-alanine ligase.